A 515-amino-acid polypeptide reads, in one-letter code: 2-isopropylmalate synthase (515 aa).

One can recognise a Pyruvate carboxyltransferase domain in the interval 4–264 (VKIFDTTLRD…NIGINQDTTQ (261 aa)). Mn(2+) contacts are provided by D13, H201, H203, and N237. A regulatory domain region spans residues 390–515 (ELDYLSVNTG…RQTTSAQEGI (126 aa)).

Belongs to the alpha-IPM synthase/homocitrate synthase family. LeuA type 1 subfamily. Homodimer. Mn(2+) serves as cofactor.

The protein resides in the cytoplasm. The catalysed reaction is 3-methyl-2-oxobutanoate + acetyl-CoA + H2O = (2S)-2-isopropylmalate + CoA + H(+). It participates in amino-acid biosynthesis; L-leucine biosynthesis; L-leucine from 3-methyl-2-oxobutanoate: step 1/4. Functionally, catalyzes the condensation of the acetyl group of acetyl-CoA with 3-methyl-2-oxobutanoate (2-ketoisovalerate) to form 3-carboxy-3-hydroxy-4-methylpentanoate (2-isopropylmalate). The polypeptide is 2-isopropylmalate synthase (Halothermothrix orenii (strain H 168 / OCM 544 / DSM 9562)).